Consider the following 370-residue polypeptide: GTPase Obg (370 aa).

Residues 1-159 (MKFIDEARIE…RMLRLELKVL (159 aa)) form the Obg domain. Residues 127-146 (NLHFKSSTNRAPRQKTDGKP) form a disordered region. The 175-residue stretch at 160 to 334 (ADVGLLGMPN…LCYAIYDYLA (175 aa)) folds into the OBG-type G domain. GTP contacts are provided by residues 166-173 (GMPNAGKS), 191-195 (FTTLA), 213-216 (DIPG), 284-287 (NKLD), and 315-317 (SAL). Mg(2+)-binding residues include S173 and T193. The interval 350–370 (ADVRFRDAPPSDGGATSGGDA) is disordered.

It belongs to the TRAFAC class OBG-HflX-like GTPase superfamily. OBG GTPase family. Monomer. Mg(2+) serves as cofactor.

Its subcellular location is the cytoplasm. Functionally, an essential GTPase which binds GTP, GDP and possibly (p)ppGpp with moderate affinity, with high nucleotide exchange rates and a fairly low GTP hydrolysis rate. Plays a role in control of the cell cycle, stress response, ribosome biogenesis and in those bacteria that undergo differentiation, in morphogenesis control. This chain is GTPase Obg, found in Burkholderia vietnamiensis (strain G4 / LMG 22486) (Burkholderia cepacia (strain R1808)).